The primary structure comprises 220 residues: Thiamine-phosphate synthase (220 aa).

Residues 46 to 50 (QFREK) and N83 each bind 4-amino-2-methyl-5-(diphosphooxymethyl)pyrimidine. The Mg(2+) site is built by D84 and D103. S122 contributes to the 4-amino-2-methyl-5-(diphosphooxymethyl)pyrimidine binding site. 149-151 (TNS) serves as a coordination point for 2-[(2R,5Z)-2-carboxy-4-methylthiazol-5(2H)-ylidene]ethyl phosphate. K152 lines the 4-amino-2-methyl-5-(diphosphooxymethyl)pyrimidine pocket. Residues G181 and 201–202 (IS) contribute to the 2-[(2R,5Z)-2-carboxy-4-methylthiazol-5(2H)-ylidene]ethyl phosphate site.

This sequence belongs to the thiamine-phosphate synthase family. The cofactor is Mg(2+).

The catalysed reaction is 2-[(2R,5Z)-2-carboxy-4-methylthiazol-5(2H)-ylidene]ethyl phosphate + 4-amino-2-methyl-5-(diphosphooxymethyl)pyrimidine + 2 H(+) = thiamine phosphate + CO2 + diphosphate. It catalyses the reaction 2-(2-carboxy-4-methylthiazol-5-yl)ethyl phosphate + 4-amino-2-methyl-5-(diphosphooxymethyl)pyrimidine + 2 H(+) = thiamine phosphate + CO2 + diphosphate. It carries out the reaction 4-methyl-5-(2-phosphooxyethyl)-thiazole + 4-amino-2-methyl-5-(diphosphooxymethyl)pyrimidine + H(+) = thiamine phosphate + diphosphate. It functions in the pathway cofactor biosynthesis; thiamine diphosphate biosynthesis; thiamine phosphate from 4-amino-2-methyl-5-diphosphomethylpyrimidine and 4-methyl-5-(2-phosphoethyl)-thiazole: step 1/1. Its function is as follows. Condenses 4-methyl-5-(beta-hydroxyethyl)thiazole monophosphate (THZ-P) and 2-methyl-4-amino-5-hydroxymethyl pyrimidine pyrophosphate (HMP-PP) to form thiamine monophosphate (TMP). The protein is Thiamine-phosphate synthase of Mannheimia succiniciproducens (strain KCTC 0769BP / MBEL55E).